Consider the following 359-residue polypeptide: NADH-quinone oxidoreductase subunit H (359 aa).

8 consecutive transmembrane segments (helical) span residues 16–36, 94–114, 129–149, 167–187, 208–228, 261–281, 296–316, and 331–351; these read IWPA…CVLL, GLFV…WAVI, LLFL…AGWA, VSYE…SASL, FLSW…ISGL, FFLA…ILFL, IPGW…FLWV, and LGWK…GAWM.

It belongs to the complex I subunit 1 family. NDH-1 is composed of 14 different subunits. Subunits NuoA, H, J, K, L, M, N constitute the membrane sector of the complex.

The protein resides in the cell inner membrane. It carries out the reaction a quinone + NADH + 5 H(+)(in) = a quinol + NAD(+) + 4 H(+)(out). In terms of biological role, NDH-1 shuttles electrons from NADH, via FMN and iron-sulfur (Fe-S) centers, to quinones in the respiratory chain. The immediate electron acceptor for the enzyme in this species is believed to be ubiquinone. Couples the redox reaction to proton translocation (for every two electrons transferred, four hydrogen ions are translocated across the cytoplasmic membrane), and thus conserves the redox energy in a proton gradient. This subunit may bind ubiquinone. This is NADH-quinone oxidoreductase subunit H from Polaromonas sp. (strain JS666 / ATCC BAA-500).